We begin with the raw amino-acid sequence, 192 residues long: Beta-glucosidase (192 aa).

This sequence belongs to the glycosyl hydrolase 3 family.

The enzyme catalyses Hydrolysis of terminal, non-reducing beta-D-glucosyl residues with release of beta-D-glucose.. Its pathway is glycan metabolism; cellulose degradation. This Schizophyllum commune (Split gill fungus) protein is Beta-glucosidase.